Consider the following 332-residue polypeptide: Beta-ketoacyl-[acyl-carrier-protein] synthase III 5 (332 aa).

Residues cysteine 111 and histidine 253 contribute to the active site. The tract at residues 254 to 258 (QANAR) is ACP-binding. Asparagine 283 is an active-site residue.

Belongs to the thiolase-like superfamily. FabH family. Homodimer.

The protein localises to the cytoplasm. The catalysed reaction is malonyl-[ACP] + acetyl-CoA + H(+) = 3-oxobutanoyl-[ACP] + CO2 + CoA. It functions in the pathway lipid metabolism; fatty acid biosynthesis. Catalyzes the condensation reaction of fatty acid synthesis by the addition to an acyl acceptor of two carbons from malonyl-ACP. Catalyzes the first condensation reaction which initiates fatty acid synthesis and may therefore play a role in governing the total rate of fatty acid production. Possesses both acetoacetyl-ACP synthase and acetyl transacylase activities. Its substrate specificity determines the biosynthesis of branched-chain and/or straight-chain of fatty acids. The polypeptide is Beta-ketoacyl-[acyl-carrier-protein] synthase III 5 (Streptomyces coelicolor (strain ATCC BAA-471 / A3(2) / M145)).